Here is an 830-residue protein sequence, read N- to C-terminus: Cyclin-dependent kinase inhibitor FAR1 (830 aa).

The interval 1-31 is disordered; it reads MKTPTRVSFEKKIHTPPSGDRDAERSPPKKF. The span at 8-27 shows a compositional bias: basic and acidic residues; it reads SFEKKIHTPPSGDRDAERSP. At Ser-87 the chain carries Phosphoserine; by CDC28. Phosphoserine occurs at positions 110 and 114. Residues 202–252 form an RING-type zinc finger; it reads CLICEESISSTFTGEKVVESTCSHTSHYNCYLMLFETLYFQGKFPECKICG. Thr-306 carries the phosphothreonine modification.

Associates with the CDC28-CLN complex. In terms of processing, thought to be phosphorylated by MAP kinase FUS3. Thought to enhance the binding of FAR1 to G1-specific cyclin-dependent kinase (CDK) complexes.

Its function is as follows. Inhibitor of the cyclin-dependent kinase CDC28. Necessary for cell cycle arrest. Involved in pheromone response. Contributes to mating efficiency. Required for oriented polarization of yeast cells in response to mating pheromones. The protein is Cyclin-dependent kinase inhibitor FAR1 (FAR1) of Saccharomyces cerevisiae (strain ATCC 204508 / S288c) (Baker's yeast).